A 1031-amino-acid polypeptide reads, in one-letter code: Error-prone DNA polymerase (1031 aa).

The protein belongs to the DNA polymerase type-C family. DnaE2 subfamily.

Its subcellular location is the cytoplasm. The catalysed reaction is DNA(n) + a 2'-deoxyribonucleoside 5'-triphosphate = DNA(n+1) + diphosphate. In terms of biological role, DNA polymerase involved in damage-induced mutagenesis and translesion synthesis (TLS). It is not the major replicative DNA polymerase. The protein is Error-prone DNA polymerase of Pseudomonas syringae pv. tomato (strain ATCC BAA-871 / DC3000).